A 240-amino-acid chain; its full sequence is Adapter protein MecA (240 aa).

This sequence belongs to the MecA family. As to quaternary structure, homodimer.

In terms of biological role, enables the recognition and targeting of unfolded and aggregated proteins to the ClpC protease or to other proteins involved in proteolysis. The protein is Adapter protein MecA of Streptococcus mutans serotype c (strain ATCC 700610 / UA159).